Consider the following 530-residue polypeptide: Arginine--tRNA ligase (530 aa).

The 'HIGH' region motif lies at 113 to 123 (ANPTGPLHIGH).

The protein belongs to the class-I aminoacyl-tRNA synthetase family. In terms of assembly, monomer.

Its subcellular location is the cytoplasm. It carries out the reaction tRNA(Arg) + L-arginine + ATP = L-arginyl-tRNA(Arg) + AMP + diphosphate. This Campylobacter jejuni subsp. doylei (strain ATCC BAA-1458 / RM4099 / 269.97) protein is Arginine--tRNA ligase.